The following is a 1953-amino-acid chain: Putative surface-exposed virulence protein BigA (1953 aa).

The first 27 residues, 1-27 (MNPMQKKKLISIAIALTLQSYYIPAIA), serve as a signal peptide directing secretion. Disordered regions lie at residues 31–50 (NDDE…EKRA), 88–258 (GGGD…TFSN), and 1496–1517 (TTAP…PQQL). The 1; truncated repeat unit spans residues 101-103 (PDN). The 15 X 11 AA tandem repeats stretch occupies residues 101–252 (PDNGGDVTPP…DDDDTPPDDS (152 aa)). One copy of the 2; truncated repeat lies at 104-113 (GGDVTPPDDG). One copy of the 3; truncated repeat lies at 114–122 (GNVTPPDDG). 11 tandem repeats follow at residues 123-133 (GNVTPPDDGGD), 134-144 (DNVTPPDDSGD), 145-155 (DDVAPPDDSGD), 156-166 (DDVTPPDDSGD), 167-177 (DDVTPPDDSGD), 178-188 (GDVTPPDDSGD), 189-199 (DDVTPPDDSGD), 200-210 (DDVTPPDDSGD), 211-221 (DDVTPPDDSGD), 222-232 (DDVTPPDDSGD), and 233-243 (DDVTPPDDSGD). Acidic residues-rich tracts occupy residues 141-177 (DSGD…DSGD) and 185-249 (DSGD…DTPP). Residues 244–252 (DDDTPPDDS) form a 15; truncated repeat. The Autotransporter domain occupies 1649–1952 (SGAQATTVFR…GFMLNVKKTF (304 aa)).

The protein is Putative surface-exposed virulence protein BigA (bigA) of Salmonella typhimurium (strain LT2 / SGSC1412 / ATCC 700720).